We begin with the raw amino-acid sequence, 341 residues long: Anthranilate phosphoribosyltransferase (341 aa).

Residues glycine 80, 83-84 (GD), threonine 88, 90-93 (NIST), 108-116 (KHGNYSVSS), and serine 120 each bind 5-phospho-alpha-D-ribose 1-diphosphate. Position 80 (glycine 80) interacts with anthranilate. Serine 92 contributes to the Mg(2+) binding site. Asparagine 111 is a binding site for anthranilate. Arginine 166 provides a ligand contact to anthranilate. Residues aspartate 224 and glutamate 225 each coordinate Mg(2+).

The protein belongs to the anthranilate phosphoribosyltransferase family. As to quaternary structure, homodimer. Requires Mg(2+) as cofactor.

It catalyses the reaction N-(5-phospho-beta-D-ribosyl)anthranilate + diphosphate = 5-phospho-alpha-D-ribose 1-diphosphate + anthranilate. It participates in amino-acid biosynthesis; L-tryptophan biosynthesis; L-tryptophan from chorismate: step 2/5. Catalyzes the transfer of the phosphoribosyl group of 5-phosphorylribose-1-pyrophosphate (PRPP) to anthranilate to yield N-(5'-phosphoribosyl)-anthranilate (PRA). This is Anthranilate phosphoribosyltransferase from Haloquadratum walsbyi (strain DSM 16790 / HBSQ001).